Reading from the N-terminus, the 334-residue chain is Phospho-N-acetylmuramoyl-pentapeptide-transferase (334 aa).

10 helical membrane-spanning segments follow: residues 2–22, 55–75, 78–98, 116–136, 154–174, 187–207, 211–231, 236–256, 262–282, and 311–331; these read IPVLVAAGVAFLVTLVLGPVV, VIFLFGAAAAVLVVAFLPGGV, GWIEGLLVLAVALGFGVLGFM, EKLLGQVLIAVALAVTAVFVL, GLALDLGWWFFLGVTVFVVLA, GLAAGTFAVAALAFAMIALVM, WVGIVLGALVGGCVGFLCYNF, VFMGDTGSLALGGGLSAAAVI, FLLIIGGVFVIETLSVIIQVI, and VVLTFWTVGLVLAVLGLAGLK.

It belongs to the glycosyltransferase 4 family. MraY subfamily. It depends on Mg(2+) as a cofactor.

The protein resides in the cell membrane. It carries out the reaction UDP-N-acetyl-alpha-D-muramoyl-L-alanyl-gamma-D-glutamyl-meso-2,6-diaminopimeloyl-D-alanyl-D-alanine + di-trans,octa-cis-undecaprenyl phosphate = di-trans,octa-cis-undecaprenyl diphospho-N-acetyl-alpha-D-muramoyl-L-alanyl-D-glutamyl-meso-2,6-diaminopimeloyl-D-alanyl-D-alanine + UMP. It functions in the pathway cell wall biogenesis; peptidoglycan biosynthesis. In terms of biological role, catalyzes the initial step of the lipid cycle reactions in the biosynthesis of the cell wall peptidoglycan: transfers peptidoglycan precursor phospho-MurNAc-pentapeptide from UDP-MurNAc-pentapeptide onto the lipid carrier undecaprenyl phosphate, yielding undecaprenyl-pyrophosphoryl-MurNAc-pentapeptide, known as lipid I. The polypeptide is Phospho-N-acetylmuramoyl-pentapeptide-transferase (Desulforudis audaxviator (strain MP104C)).